Reading from the N-terminus, the 348-residue chain is Chlorophyll(ide) b reductase NOL, chloroplastic (348 aa).

Residues 1-61 (MATWSGFNVS…TRQNLTVTPS (61 aa)) constitute a chloroplast transit peptide. Residue 84 to 108 (ITGSTKGIGYALAREFLKAGDNVVI) coordinates NAD(+). The active-site Proton acceptor is Y233.

Belongs to the short-chain dehydrogenases/reductases (SDR) family. In terms of assembly, interacts with NCY1 to form a complex that acts as a chlorophyll b reductase. Interacts with HCAR, RCCR and the LHCII complex. Part of a SGR1-CCE-LHCII complex, which acts in chlorophyll breakdown.

Its subcellular location is the plastid. It is found in the chloroplast thylakoid membrane. It catalyses the reaction 7(1)-hydroxychlorophyllide a + NAD(+) = chlorophyllide b + NADH + H(+). The enzyme catalyses 7(1)-hydroxychlorophyllide a + NADP(+) = chlorophyllide b + NADPH + H(+). Its function is as follows. Required for chlorophyll b degradation. Chlorophyll b, chlorophyllide b, pheophorbide b and pheophytin b can be used as substrates. Belongs to the chlorophyll catabolic enzymes (CCEs). This Arabidopsis thaliana (Mouse-ear cress) protein is Chlorophyll(ide) b reductase NOL, chloroplastic (NOL).